A 404-amino-acid polypeptide reads, in one-letter code: Phosphopentomutase (404 aa).

Mn(2+)-binding residues include aspartate 10, aspartate 303, histidine 308, aspartate 344, histidine 345, and histidine 356.

Belongs to the phosphopentomutase family. The cofactor is Mn(2+).

It is found in the cytoplasm. It catalyses the reaction 2-deoxy-alpha-D-ribose 1-phosphate = 2-deoxy-D-ribose 5-phosphate. The enzyme catalyses alpha-D-ribose 1-phosphate = D-ribose 5-phosphate. It functions in the pathway carbohydrate degradation; 2-deoxy-D-ribose 1-phosphate degradation; D-glyceraldehyde 3-phosphate and acetaldehyde from 2-deoxy-alpha-D-ribose 1-phosphate: step 1/2. Isomerase that catalyzes the conversion of deoxy-ribose 1-phosphate (dRib-1-P) and ribose 1-phosphate (Rib-1-P) to deoxy-ribose 5-phosphate (dRib-5-P) and ribose 5-phosphate (Rib-5-P), respectively. This Shewanella sp. (strain ANA-3) protein is Phosphopentomutase.